Consider the following 414-residue polypeptide: Cytochrome P450 CYP105Q4 (414 aa).

Positions 1-12 (MSDTLASPSPET) are enriched in polar residues. Residues 1 to 21 (MSDTLASPSPETASGIPDYPM) form a disordered region. Heme-binding residues include H108, Q302, R304, H361, and C363.

Belongs to the cytochrome P450 family. Heme is required as a cofactor.

Can bind oleic-acid derivatives, amphotericin B like precursors and a variety of nitrogen ligand donors. The protein is Cytochrome P450 CYP105Q4 of Mycobacterium marinum (strain ATCC BAA-535 / M).